We begin with the raw amino-acid sequence, 312 residues long: Olfactory receptor 4F3/4F16/4F29 (312 aa).

At 1–25 (MDGENHSVVSEFLFLGLTHSWEIQL) the chain is on the extracellular side. N-linked (GlcNAc...) asparagine glycosylation occurs at asparagine 5. A helical transmembrane segment spans residues 26-49 (LLLVFSSVLYVASITGNILIVFSV). At 50 to 57 (TTDPHLHS) the chain is on the cytoplasmic side. Residues 58–79 (PMYFLLASLSFIDLGACSVTSP) traverse the membrane as a helical segment. Over 80-100 (KMIYDLFRKRKVISFGGCIAQ) the chain is Extracellular. A disulfide bond links cysteine 97 and cysteine 189. A helical membrane pass occupies residues 101–120 (IFFIHVVGGVEMVLLIAMAF). Topologically, residues 121-139 (DRYVALCKPLHYLTIMSPR) are cytoplasmic. Residues 140 to 158 (MCLSFLAVAWTLGVSHSLF) form a helical membrane-spanning segment. Residues 159–195 (QLAFLVNLAFCGPNVLDSFYCDLPRLLRLACTDTYRL) are Extracellular-facing. A helical membrane pass occupies residues 196 to 219 (QFMVTVNSGFICVGTFFILLISYV). At 220–235 (FILFTVWKHSSGGSSK) the chain is on the cytoplasmic side. A helical membrane pass occupies residues 236–258 (ALSTLSAHSTVVLLFFGPPMFVY). Residues 259–269 (TRPHPNSQMDK) lie on the Extracellular side of the membrane. The helical transmembrane segment at 270–289 (FLAIFDAVLTPFLNPVVYTF) threads the bilayer. Residues 290–312 (RNKEMKAAIKRVCKQLVIYKRIS) are Cytoplasmic-facing.

This sequence belongs to the G-protein coupled receptor 1 family.

The protein localises to the cell membrane. Odorant receptor. This Homo sapiens (Human) protein is Olfactory receptor 4F3/4F16/4F29 (OR4F3).